Here is a 737-residue protein sequence, read N- to C-terminus: ARMADILLO BTB ARABIDOPSIS PROTEIN 1 (737 aa).

ARM repeat units lie at residues 112-154 (DENV…KDCA), 165-212 (PGYQ…NIAH), 215-254 (PRIK…TVSF), 257-296 (DENK…NLVH), 299-338 (PDIK…QFAA), 341-380 (SDCK…RLAQ), 382-421 (AHNQ…GLAD), 456-495 (LKRL…HLCD), and 497-536 (KDGK…ELAK). The BTB domain maps to 568-635 (SDVTFLIDGK…IYSGRINIAK (68 aa)).

As to quaternary structure, forms a heterodimeric complex with TCP24. Interacts with the origin recognition complex (preRC) components ORC1A, ORC1B, CDT1A and CDT1B. Interacts with DUF7/AIP1. Weakly expressed in the emerging lateral roots and mainly expressed in the shoot apex, young leaves and flower buds.

The protein localises to the nucleus. The protein operates within protein modification; protein ubiquitination. Its function is as follows. May act as a substrate-specific adapter of an E3 ubiquitin-protein ligase complex (CUL3-RBX1-BTB) which mediates the ubiquitination and subsequent proteasomal degradation of target proteins. In association with TCP24, exerts a negative role in cell proliferation in leaves, possibly by inhibiting mitotic DNA replication. The polypeptide is ARMADILLO BTB ARABIDOPSIS PROTEIN 1 (ABAP1) (Arabidopsis thaliana (Mouse-ear cress)).